The following is a 288-amino-acid chain: 4-diphosphocytidyl-2-C-methyl-D-erythritol kinase (288 aa).

The active site involves lysine 19. 102–112 (PMGGGIGGGSS) is an ATP binding site. Aspartate 144 is a catalytic residue.

This sequence belongs to the GHMP kinase family. IspE subfamily.

It catalyses the reaction 4-CDP-2-C-methyl-D-erythritol + ATP = 4-CDP-2-C-methyl-D-erythritol 2-phosphate + ADP + H(+). It functions in the pathway isoprenoid biosynthesis; isopentenyl diphosphate biosynthesis via DXP pathway; isopentenyl diphosphate from 1-deoxy-D-xylulose 5-phosphate: step 3/6. Functionally, catalyzes the phosphorylation of the position 2 hydroxy group of 4-diphosphocytidyl-2C-methyl-D-erythritol. This is 4-diphosphocytidyl-2-C-methyl-D-erythritol kinase from Pseudomonas savastanoi pv. phaseolicola (strain 1448A / Race 6) (Pseudomonas syringae pv. phaseolicola (strain 1448A / Race 6)).